We begin with the raw amino-acid sequence, 218 residues long: Alkylmercury lyase (218 aa).

This sequence belongs to the MerB family.

The catalysed reaction is an alkylmercury + H(+) = an alkane + Hg(2+). In terms of biological role, cleaves the carbon-mercury bond of organomercurials such as phenylmercuric acetate. One product is Hg(2+), which is subsequently detoxified by the mercuric reductase. The protein is Alkylmercury lyase of Clostridium butyricum.